The chain runs to 323 residues: Acetyl-coenzyme A carboxylase carboxyl transferase subunit alpha (323 aa).

One can recognise a CoA carboxyltransferase C-terminal domain in the interval 35 to 296 (EVLSELDELR…GMTLKKCLDE (262 aa)).

It belongs to the AccA family. In terms of assembly, acetyl-CoA carboxylase is a heterohexamer composed of biotin carboxyl carrier protein (AccB), biotin carboxylase (AccC) and two subunits each of ACCase subunit alpha (AccA) and ACCase subunit beta (AccD).

Its subcellular location is the cytoplasm. The enzyme catalyses N(6)-carboxybiotinyl-L-lysyl-[protein] + acetyl-CoA = N(6)-biotinyl-L-lysyl-[protein] + malonyl-CoA. Its pathway is lipid metabolism; malonyl-CoA biosynthesis; malonyl-CoA from acetyl-CoA: step 1/1. Component of the acetyl coenzyme A carboxylase (ACC) complex. First, biotin carboxylase catalyzes the carboxylation of biotin on its carrier protein (BCCP) and then the CO(2) group is transferred by the carboxyltransferase to acetyl-CoA to form malonyl-CoA. The chain is Acetyl-coenzyme A carboxylase carboxyl transferase subunit alpha from Aquifex aeolicus (strain VF5).